A 343-amino-acid chain; its full sequence is Dihydroorotate dehydrogenase (quinone) (343 aa).

FMN-binding positions include 58–62 (AGYDK) and Ser82. A substrate-binding site is contributed by Lys62. Position 107–111 (107–111 (NRMGF)) interacts with substrate. Asn136 and Asn167 together coordinate FMN. Asn167 is a substrate binding site. Ser170 acts as the Nucleophile in catalysis. Asn172 contacts substrate. The FMN site is built by Lys206 and Ser234. 235–236 (NT) is a substrate binding site. FMN-binding positions include Gly256, Gly285, and 306-307 (YS).

Belongs to the dihydroorotate dehydrogenase family. Type 2 subfamily. As to quaternary structure, monomer. FMN serves as cofactor.

It is found in the cell membrane. It carries out the reaction (S)-dihydroorotate + a quinone = orotate + a quinol. It participates in pyrimidine metabolism; UMP biosynthesis via de novo pathway; orotate from (S)-dihydroorotate (quinone route): step 1/1. In terms of biological role, catalyzes the conversion of dihydroorotate to orotate with quinone as electron acceptor. The sequence is that of Dihydroorotate dehydrogenase (quinone) from Erythrobacter litoralis (strain HTCC2594).